A 465-amino-acid chain; its full sequence is UDP-N-acetylmuramate--L-alanine ligase (465 aa).

Residue 112 to 118 (GTHGKTT) coordinates ATP.

It belongs to the MurCDEF family.

It is found in the cytoplasm. It catalyses the reaction UDP-N-acetyl-alpha-D-muramate + L-alanine + ATP = UDP-N-acetyl-alpha-D-muramoyl-L-alanine + ADP + phosphate + H(+). Its pathway is cell wall biogenesis; peptidoglycan biosynthesis. Functionally, cell wall formation. In Burkholderia mallei (strain NCTC 10247), this protein is UDP-N-acetylmuramate--L-alanine ligase.